We begin with the raw amino-acid sequence, 391 residues long: S-adenosylmethionine synthase 5 (391 aa).

E9 is a binding site for Mg(2+). H15 contributes to the ATP binding site. E43 contributes to the K(+) binding site. L-methionine is bound by residues E56 and Q99. ATP contacts are provided by residues 167–169, 235–238, D246, 252–253, A269, K273, and K277; these read DGK, SGRF, and RK. L-methionine is bound at residue D246. K277 contributes to the L-methionine binding site.

It belongs to the AdoMet synthase family. In terms of assembly, homotetramer. It depends on Mn(2+) as a cofactor. Mg(2+) serves as cofactor. Co(2+) is required as a cofactor. The cofactor is K(+).

The protein resides in the cytoplasm. The enzyme catalyses L-methionine + ATP + H2O = S-adenosyl-L-methionine + phosphate + diphosphate. It functions in the pathway amino-acid biosynthesis; S-adenosyl-L-methionine biosynthesis; S-adenosyl-L-methionine from L-methionine: step 1/1. Functionally, catalyzes the formation of S-adenosylmethionine from methionine and ATP. The reaction comprises two steps that are both catalyzed by the same enzyme: formation of S-adenosylmethionine (AdoMet) and triphosphate, and subsequent hydrolysis of the triphosphate. The protein is S-adenosylmethionine synthase 5 (METK5) of Vitis vinifera (Grape).